Here is a 233-residue protein sequence, read N- to C-terminus: Protein DEHYDRATION-INDUCED 19 homolog 2 (233 aa).

The interval 176-215 (DLHSDSSDNNFLLNKFPDDKTAERAEPSLSEKDQKERAQR) is disordered. A compositionally biased stretch (basic and acidic residues) spans 191 to 214 (FPDDKTAERAEPSLSEKDQKERAQ).

Belongs to the Di19 family.

The protein is Protein DEHYDRATION-INDUCED 19 homolog 2 (DI19-2) of Oryza sativa subsp. japonica (Rice).